The following is a 360-amino-acid chain: Photosystem II protein D1 (360 aa).

Helical transmembrane passes span 29–46 (YIGW…TATS), 118–133 (HFLL…EWEL), and 142–156 (WISV…AAAA). Histidine 118 contributes to the chlorophyll a binding site. Pheophytin a is bound at residue tyrosine 126. The [CaMn4O5] cluster site is built by aspartate 170 and glutamate 189. Residues 197 to 218 (FHQLGVAGVFGGSLFSAMHGSL) form a helical membrane-spanning segment. Histidine 198 is a binding site for chlorophyll a. Residues histidine 215 and 264–265 (SF) contribute to the a quinone site. A Fe cation-binding site is contributed by histidine 215. A Fe cation-binding site is contributed by histidine 272. The chain crosses the membrane as a helical span at residues 274 to 288 (FLGLWPVVGIWFTAM). [CaMn4O5] cluster-binding residues include histidine 332, glutamate 333, aspartate 342, and alanine 344. Positions 345–360 (SSNSLPVSLVAPSVNG) are excised as a propeptide.

Belongs to the reaction center PufL/M/PsbA/D family. In terms of assembly, PSII is composed of 1 copy each of membrane proteins PsbA, PsbB, PsbC, PsbD, PsbE, PsbF, PsbH, PsbI, PsbJ, PsbK, PsbL, PsbM, PsbT, PsbX, PsbY, PsbZ, Psb30/Ycf12, at least 3 peripheral proteins of the oxygen-evolving complex and a large number of cofactors. It forms dimeric complexes. It depends on The D1/D2 heterodimer binds P680, chlorophylls that are the primary electron donor of PSII, and subsequent electron acceptors. It shares a non-heme iron and each subunit binds pheophytin, quinone, additional chlorophylls, carotenoids and lipids. D1 provides most of the ligands for the Mn4-Ca-O5 cluster of the oxygen-evolving complex (OEC). There is also a Cl(-1) ion associated with D1 and D2, which is required for oxygen evolution. The PSII complex binds additional chlorophylls, carotenoids and specific lipids. as a cofactor. Post-translationally, tyr-161 forms a radical intermediate that is referred to as redox-active TyrZ, YZ or Y-Z. C-terminally processed by CTPA; processing is essential to allow assembly of the oxygen-evolving complex and thus photosynthetic growth.

The protein resides in the plastid. The protein localises to the chloroplast thylakoid membrane. It carries out the reaction 2 a plastoquinone + 4 hnu + 2 H2O = 2 a plastoquinol + O2. Photosystem II (PSII) is a light-driven water:plastoquinone oxidoreductase that uses light energy to abstract electrons from H(2)O, generating O(2) and a proton gradient subsequently used for ATP formation. It consists of a core antenna complex that captures photons, and an electron transfer chain that converts photonic excitation into a charge separation. The D1/D2 (PsbA/PsbD) reaction center heterodimer binds P680, the primary electron donor of PSII as well as several subsequent electron acceptors. The protein is Photosystem II protein D1 of Gracilaria tenuistipitata var. liui (Red alga).